The primary structure comprises 631 residues: MPSTSFPLLETIDDPAQLRQLARAQLKVLAAELRGFVLESVSRTGGHLSSNLGTVELTVALHHVFQTPHDRLVWDVGHQTYAHKILTGRRERMHTLRQQGGISGFPQRGESVYDTFGTAHSSTSISAALGMALAAKRKGESRHTVAIIGDGAMSAGMAFEALNNAGVADCNLLVVLNDNDMSISPPVGALNRYLAQLMSGRFYAAAKNMGKTVLRPMPPLLEFAKRFEQQAKGLVVPATLFEKFGFNYIGPIDGHDLDSLIPTLDNIKGLQGPQFLHVVTKKGQGYKLAEADPVAYHGPARFDPAVGLVKSSTAPRLTFTQVFGQWLCDMAAHDERLVGITPAMREGSGMVEFEQRFPDRYYDVGIAEQHAVTFAAGMACEGAKPVVAIYSTFLQRGYDQLIHDVALQNLPVVFALDRAGLVGADGATHAGAYDIAFLRCIPNMGLACPADERECRQLLSSAYAQNHPVAVRYPRGSGAGVAPLAGLDGLPFGKGEIRRERQRQDSNAPRIAILAFGSLLYPALEAADALDATVVNMRWAKPLDDALLRQVAEGHDALVTLEEGAIMGGAGSAVTETLNAAGILRPVLQLGLADIFIEHGDPAKLLAMQGLNAAGIRAAIAARFPAIDVAR.

Thiamine diphosphate-binding positions include histidine 78 and alanine 119–serine 121. A Mg(2+)-binding site is contributed by aspartate 150. Thiamine diphosphate is bound by residues glycine 151–alanine 152, asparagine 179, tyrosine 286, and glutamate 368. A Mg(2+)-binding site is contributed by asparagine 179.

It belongs to the transketolase family. DXPS subfamily. In terms of assembly, homodimer. Requires Mg(2+) as cofactor. It depends on thiamine diphosphate as a cofactor.

It catalyses the reaction D-glyceraldehyde 3-phosphate + pyruvate + H(+) = 1-deoxy-D-xylulose 5-phosphate + CO2. Its pathway is metabolic intermediate biosynthesis; 1-deoxy-D-xylulose 5-phosphate biosynthesis; 1-deoxy-D-xylulose 5-phosphate from D-glyceraldehyde 3-phosphate and pyruvate: step 1/1. In terms of biological role, catalyzes the acyloin condensation reaction between C atoms 2 and 3 of pyruvate and glyceraldehyde 3-phosphate to yield 1-deoxy-D-xylulose-5-phosphate (DXP). In Verminephrobacter eiseniae (strain EF01-2), this protein is 1-deoxy-D-xylulose-5-phosphate synthase.